The primary structure comprises 380 residues: DNA replication and repair protein RecF (380 aa).

G30 to S37 serves as a coordination point for ATP.

It belongs to the RecF family.

It is found in the cytoplasm. The RecF protein is involved in DNA metabolism; it is required for DNA replication and normal SOS inducibility. RecF binds preferentially to single-stranded, linear DNA. It also seems to bind ATP. This Crocosphaera subtropica (strain ATCC 51142 / BH68) (Cyanothece sp. (strain ATCC 51142)) protein is DNA replication and repair protein RecF.